We begin with the raw amino-acid sequence, 225 residues long: 3-dehydroquinate dehydratase (225 aa).

3-dehydroquinate-binding positions include 30–32 (EWR) and arginine 62. Histidine 118 acts as the Proton donor/acceptor in catalysis. Lysine 143 functions as the Schiff-base intermediate with substrate in the catalytic mechanism. Residues arginine 186, serine 205, and glutamine 209 each coordinate 3-dehydroquinate.

It belongs to the type-I 3-dehydroquinase family. Homodimer.

The catalysed reaction is 3-dehydroquinate = 3-dehydroshikimate + H2O. The protein operates within metabolic intermediate biosynthesis; chorismate biosynthesis; chorismate from D-erythrose 4-phosphate and phosphoenolpyruvate: step 3/7. Its function is as follows. Involved in the third step of the chorismate pathway, which leads to the biosynthesis of aromatic amino acids. Catalyzes the cis-dehydration of 3-dehydroquinate (DHQ) and introduces the first double bond of the aromatic ring to yield 3-dehydroshikimate. The protein is 3-dehydroquinate dehydratase of Streptococcus thermophilus (strain ATCC BAA-250 / LMG 18311).